The primary structure comprises 276 residues: Small ribosomal subunit protein uS2 (276 aa).

It belongs to the universal ribosomal protein uS2 family.

The polypeptide is Small ribosomal subunit protein uS2 (Chlamydia abortus (strain DSM 27085 / S26/3) (Chlamydophila abortus)).